The sequence spans 76 residues: FMRFamide-related neuropeptides (76 aa).

Residues 1-27 (MCVQTRMLVAVAVVLVVLAVLSDPVSA) form the signal peptide. A Phenylalanine amide modification is found at Phe-39.

It belongs to the FARP (FMRFamide related peptide) family. As to expression, olfactory lobe and accessory lobe, olfactory globular tract, olfactory lobe cells (at protein level). Widely distributed throughout nervous system.

Its subcellular location is the secreted. GYRKPPFNGSIF-amide may be involved in olfaction and contraction of hindgut. In Procambarus clarkii (Red swamp crayfish), this protein is FMRFamide-related neuropeptides.